Here is a 638-residue protein sequence, read N- to C-terminus: Nucleolar protein 4 (638 aa).

4 disordered regions span residues 210–312 (QQDE…SPLS), 343–403 (EREA…TDGV), 503–535 (NAAKRMRLERQQDESAPADKQCKPEATQATYST), and 573–603 (SSGPTDLSMKRQLATSSGSSSSSNSRPQLSP). Acidic residues predominate over residues 211 to 225 (QDEDESSIESDEFDM). 4 stretches are compositionally biased toward polar residues: residues 229 to 254 (TRMSAVNSDLSSNLEERMQSPQNLHG), 263 to 281 (ESFNGNETLGHSSIASGGT), 302 to 312 (QPLNLSDSPLS), and 351 to 363 (SKSPAHSYSSYDS). 3 stretches are compositionally biased toward basic and acidic residues: residues 364-374 (GKNESVDRGAE), 391-403 (HDDSEKVNETDGV), and 503-515 (NAAKRMRLERQQD). Over residues 588–597 (SSGSSSSSNS) the composition is skewed to low complexity.

Expressed predominantly in fetal brain, adult brain and testis.

It localises to the nucleus. The protein resides in the nucleolus. The sequence is that of Nucleolar protein 4 (NOL4) from Homo sapiens (Human).